A 297-amino-acid polypeptide reads, in one-letter code: Large ribosomal subunit protein uL18 (297 aa).

Residue glycine 2 is modified to N-acetylglycine. Lysine 5 and lysine 48 each carry N6-acetyllysine. The residue at position 185 (serine 185) is a Phosphoserine. Residue lysine 220 is modified to N6-acetyllysine; alternate. Lysine 220 participates in a covalent cross-link: Glycyl lysine isopeptide (Lys-Gly) (interchain with G-Cter in SUMO1); alternate. Lysine 220 participates in a covalent cross-link: Glycyl lysine isopeptide (Lys-Gly) (interchain with G-Cter in SUMO2); alternate. The residue at position 232 (threonine 232) is a Phosphothreonine. Residues 253–297 (YEKKPKKEVKKKRWNRPKMSLAQKKDRVAQKKASFLRAQERAAES) form a disordered region. Residues 258–268 (KKEVKKKRWNR) show a composition bias toward basic residues. At serine 272 the chain carries Phosphoserine.

Belongs to the universal ribosomal protein uL18 family. In terms of assembly, component of the large ribosomal subunit (LSU). Part of the 5S RNP complex, which is a LSU subcomplex composed of the 5S RNA, RPL5 and RPL11. Component of a hexameric 5S RNP precursor complex, composed of 5S RNA, RRS1, RPF2/BXDC1, RPL5, RPL11 and HEATR3; this complex acts as a precursor for ribosome assembly. Interacts with NVL in an ATP-dependent manner. Interacts with RRP1B. Interacts with IPO5, IPO7 and KPNB1; these interactions may be involved in RPL5 nuclear import for the assembly of ribosomal subunits. Interacts with RRP1B.

It localises to the cytoplasm. The protein resides in the nucleus. Its subcellular location is the nucleolus. Functionally, component of the ribosome, a large ribonucleoprotein complex responsible for the synthesis of proteins in the cell. The small ribosomal subunit (SSU) binds messenger RNAs (mRNAs) and translates the encoded message by selecting cognate aminoacyl-transfer RNA (tRNA) molecules. The large subunit (LSU) contains the ribosomal catalytic site termed the peptidyl transferase center (PTC), which catalyzes the formation of peptide bonds, thereby polymerizing the amino acids delivered by tRNAs into a polypeptide chain. The nascent polypeptides leave the ribosome through a tunnel in the LSU and interact with protein factors that function in enzymatic processing, targeting, and the membrane insertion of nascent chains at the exit of the ribosomal tunnel. As part of the 5S RNP/5S ribonucleoprotein particle it is an essential component of the LSU, required for its formation and the maturation of rRNAs. It also couples ribosome biogenesis to p53/TP53 activation. As part of the 5S RNP it accumulates in the nucleoplasm and inhibits MDM2, when ribosome biogenesis is perturbed, mediating the stabilization and the activation of TP53. The polypeptide is Large ribosomal subunit protein uL18 (RPL5) (Macaca fascicularis (Crab-eating macaque)).